The sequence spans 380 residues: Cytochrome b (380 aa).

The next 4 membrane-spanning stretches (helical) occupy residues 34–54 (FGSLLGICLATQILTGLLLAA), 78–99 (WLIRNLHANGASFFFICIYLHI), 114–134 (WNTGVILLLTLMATAFVGYVL), and 179–199 (FFTLHFLLPFMIMGLTLIHLT). Residues His84 and His98 each coordinate heme b. His183 and His197 together coordinate heme b. His202 is a binding site for a ubiquinone. The next 4 helical transmembrane spans lie at 227-247 (LKDILGFMLMLLPLMTLALFS), 289-309 (LGGVLALAASVLILFLAPLLH), 321-341 (FSQLLFWTLTANVLILTWVGS), and 348-368 (FIIIGQLASLTYFTILLILFP).

It belongs to the cytochrome b family. The cytochrome bc1 complex contains 11 subunits: 3 respiratory subunits (MT-CYB, CYC1 and UQCRFS1), 2 core proteins (UQCRC1 and UQCRC2) and 6 low-molecular weight proteins (UQCRH/QCR6, UQCRB/QCR7, UQCRQ/QCR8, UQCR10/QCR9, UQCR11/QCR10 and a cleavage product of UQCRFS1). This cytochrome bc1 complex then forms a dimer. Requires heme b as cofactor.

It localises to the mitochondrion inner membrane. Its function is as follows. Component of the ubiquinol-cytochrome c reductase complex (complex III or cytochrome b-c1 complex) that is part of the mitochondrial respiratory chain. The b-c1 complex mediates electron transfer from ubiquinol to cytochrome c. Contributes to the generation of a proton gradient across the mitochondrial membrane that is then used for ATP synthesis. This chain is Cytochrome b (MT-CYB), found in Bugeranus carunculatus (Wattled crane).